The primary structure comprises 486 residues: ATP synthase subunit beta (486 aa).

164-171 (GGAGVGKT) is a binding site for ATP.

This sequence belongs to the ATPase alpha/beta chains family. In terms of assembly, F-type ATPases have 2 components, CF(1) - the catalytic core - and CF(0) - the membrane proton channel. CF(1) has five subunits: alpha(3), beta(3), gamma(1), delta(1), epsilon(1). CF(0) has four main subunits: a(1), b(1), b'(1) and c(9-12).

Its subcellular location is the cellular thylakoid membrane. The enzyme catalyses ATP + H2O + 4 H(+)(in) = ADP + phosphate + 5 H(+)(out). In terms of biological role, produces ATP from ADP in the presence of a proton gradient across the membrane. The catalytic sites are hosted primarily by the beta subunits. In Prochlorococcus marinus subsp. pastoris (strain CCMP1986 / NIES-2087 / MED4), this protein is ATP synthase subunit beta.